We begin with the raw amino-acid sequence, 1703 residues long: Ferlin 2 (1703 aa).

C2 domains lie at I18–L141 and K207–F332. 3 disordered regions span residues N913–N937, N970–T1025, and K1194–G1228. The span at N916–D928 shows a compositional bias: acidic residues. The span at Q979–S991 shows a compositional bias: polar residues. The span at S993 to S1009 shows a compositional bias: basic and acidic residues. Residues N1198–S1209 show a composition bias toward low complexity. In terms of domain architecture, C2 3 spans V1466 to F1595. Residues A1628–K1651 form a disordered region. Basic and acidic residues predominate over residues P1641 to K1651. A helical membrane pass occupies residues F1681–L1701.

The protein belongs to the ferlin family.

It localises to the membrane. Its function is as follows. Regulates mucocyst exocytosis. This chain is Ferlin 2, found in Tetrahymena thermophila (strain SB210).